The primary structure comprises 475 residues: Rho GTPase-activating protein 15 (475 aa).

A compositionally biased stretch (polar residues) spans 1–22 (MQKSTNSDTSVETLNSTRQGTG). The interval 1-23 (MQKSTNSDTSVETLNSTRQGTGA) is disordered. A phosphoserine mark is found at S43, S103, S196, S199, and S243. The region spanning 79–189 (MVEKEGYLQK…WFHAIKNAID (111 aa)) is the PH domain. In terms of domain architecture, Rho-GAP spans 281–470 (SHLHKVCERE…LMLSEYSKIF (190 aa)).

Expressed in lung, liver and lymphoid cells.

It is found in the cytoplasm. The protein resides in the membrane. Its function is as follows. GTPase activator for the Rho-type GTPases by converting them to an inactive GDP-bound state. Has activity toward RAC1. Overexpression results in an increase in actin stress fibers and cell contraction. The polypeptide is Rho GTPase-activating protein 15 (ARHGAP15) (Homo sapiens (Human)).